A 677-amino-acid chain; its full sequence is Methionine--tRNA ligase (677 aa).

The 'HIGH' region motif lies at 15–25 (PYANGPIHIGH). Residues Cys146, Cys149, Cys159, and Cys162 each contribute to the Zn(2+) site. A 'KMSKS' region motif is present at residues 332 to 336 (KMSKS). Lys335 contacts ATP. A tRNA-binding domain is found at 576–677 (DFAKVDLRVA…DGAKPGMRIM (102 aa)).

The protein belongs to the class-I aminoacyl-tRNA synthetase family. MetG type 1 subfamily. Homodimer. It depends on Zn(2+) as a cofactor.

The protein localises to the cytoplasm. The enzyme catalyses tRNA(Met) + L-methionine + ATP = L-methionyl-tRNA(Met) + AMP + diphosphate. Functionally, is required not only for elongation of protein synthesis but also for the initiation of all mRNA translation through initiator tRNA(fMet) aminoacylation. The sequence is that of Methionine--tRNA ligase from Idiomarina loihiensis (strain ATCC BAA-735 / DSM 15497 / L2-TR).